The primary structure comprises 573 residues: 60 kDa heat shock protein, mitochondrial (573 aa).

A mitochondrion-targeting transit peptide spans 1-26; the sequence is MLRLPTVLRQMRPVSRALAPHLTRAY. Position 31 is an N6-succinyllysine (lysine 31). 2 positions are modified to phosphoserine: serine 67 and serine 70. Lysine 75 provides a ligand contact to ATP. The residue at position 75 (lysine 75) is an N6-acetyllysine. Position 82 is an N6-acetyllysine; alternate (lysine 82). Lysine 82 is subject to N6-succinyllysine; alternate. Lysine 87 is subject to N6-acetyllysine. Position 90 is a phosphotyrosine (tyrosine 90). Lysine 91 carries the N6-acetyllysine modification. An ATP-binding site is contributed by 111–115; it reads DGTTT. Lysine 125 carries the post-translational modification N6-acetyllysine; alternate. Lysine 125 carries the N6-succinyllysine; alternate modification. Lysine 130 carries the post-translational modification N6-acetyllysine. Lysine 133 carries the post-translational modification N6-acetyllysine; alternate. N6-succinyllysine; alternate is present on lysine 133. At lysine 133 the chain carries N6-malonyllysine; alternate. At lysine 156 the chain carries N6-acetyllysine. 5 positions are modified to N6-acetyllysine; alternate: lysine 191, lysine 202, lysine 205, lysine 218, and lysine 236. 5 positions are modified to N6-succinyllysine; alternate: lysine 191, lysine 202, lysine 205, lysine 218, and lysine 236. Residue lysine 249 is modified to N6-acetyllysine. The residue at position 250 (lysine 250) is an N6-acetyllysine; alternate. The residue at position 250 (lysine 250) is an N6-succinyllysine; alternate. Residues lysine 269 and lysine 292 each carry the N6-acetyllysine modification. The residue at position 301 (lysine 301) is an N6-succinyllysine. Lysine 314 bears the N6-acetyllysine mark. Lysine 352 carries the N6-acetyllysine; alternate modification. Residue lysine 352 is modified to N6-succinyllysine; alternate. Lysine 359 and lysine 389 each carry N6-acetyllysine. Lysine 396 is modified (N6-acetyllysine; alternate). Lysine 396 carries the post-translational modification N6-succinyllysine; alternate. The residue at position 410 (serine 410) is a Phosphoserine. Position 440 (glycine 440) interacts with ATP. Lysine 455 carries the N6-acetyllysine; alternate modification. The residue at position 455 (lysine 455) is an N6-succinyllysine; alternate. Lysine 469 carries the N6-acetyllysine modification. The residue at position 481 (lysine 481) is an N6-acetyllysine; alternate. Position 481 is an N6-succinyllysine; alternate (lysine 481). A Phosphoserine modification is found at serine 488. An ATP-binding site is contributed by aspartate 520. Lysine 551 participates in a covalent cross-link: Glycyl lysine isopeptide (Lys-Gly) (interchain with G-Cter in SUMO2).

Belongs to the chaperonin (HSP60) family. In terms of assembly, homoheptamer arranged in a ring structure. The functional units of these chaperonins consist of heptameric rings of the large subunit Hsp60, which function as a back-to-back double ring. Interacts with 2 heptameric Hsp10 rings to form the symmetrical football complex. Interacts with HRAS. Interacts with ATAD3A. Interacts with ETFBKMT and EEF1AKMT3. Interacts with MFHAS1.

The protein localises to the mitochondrion matrix. It carries out the reaction ATP + H2O + a folded polypeptide = ADP + phosphate + an unfolded polypeptide.. Chaperonin implicated in mitochondrial protein import and macromolecular assembly. Together with Hsp10, facilitates the correct folding of imported proteins. May also prevent misfolding and promote the refolding and proper assembly of unfolded polypeptides generated under stress conditions in the mitochondrial matrix. The functional units of these chaperonins consist of heptameric rings of the large subunit Hsp60, which function as a back-to-back double ring. In a cyclic reaction, Hsp60 ring complexes bind one unfolded substrate protein per ring, followed by the binding of ATP and association with 2 heptameric rings of the co-chaperonin Hsp10. This leads to sequestration of the substrate protein in the inner cavity of Hsp60 where, for a certain period of time, it can fold undisturbed by other cell components. Synchronous hydrolysis of ATP in all Hsp60 subunits results in the dissociation of the chaperonin rings and the release of ADP and the folded substrate protein. This is 60 kDa heat shock protein, mitochondrial (HSPD1) from Cricetulus griseus (Chinese hamster).